The following is a 387-amino-acid chain: MKLIQLYGDRGLTIVKGEAQYVWDIEGRRYLDFHTGIGVAFLGHRNPIILEYLKNQLENISILSTSFSTPIKDEMLQALDKVKPDKMDNAMLLNSGTEAVEAALKTARKITGRKKIIAFKNAFHGRTAGSLSVTWNKKYREPFEPLVGPVEFLTFNNIEDLSKIDNETAAVIVEPIQGESGVIPANIEFMKALKEKTENTGSLLIFDEIQTGFGRTGKLWAYKHYNIVPDILTAGKAIGGGFPVSVVFLPDHIANKLEEGDHGSTYGGNPMAMAAVTAACKVIEKENVVEQANQKGQQFSNILVKNLADLKVVREVRGKGLMIGIDIRFQPGQVLKYLQEKGILAVKAGSTVIRFLPSYLITYENMEEASNVLREGLLKIENKAVSS.

Pyridoxal 5'-phosphate-binding positions include 96-97 and F123; that span reads GT. Position 126 (R126) interacts with substrate. 207–210 lines the pyridoxal 5'-phosphate pocket; it reads DEIQ. K236 is subject to N6-(pyridoxal phosphate)lysine. Position 264 (S264) interacts with substrate. A pyridoxal 5'-phosphate-binding site is contributed by T265.

This sequence belongs to the class-III pyridoxal-phosphate-dependent aminotransferase family. LysJ subfamily. Homodimer. It depends on pyridoxal 5'-phosphate as a cofactor.

It localises to the cytoplasm. The enzyme catalyses [amino-group carrier protein]-C-terminal-gamma-(L-lysyl)-L-glutamate + 2-oxoglutarate = [amino-group carrier protein]-C-terminal-N-(1-carboxy-5-oxopentan-1-yl)-L-glutamine + L-glutamate. It carries out the reaction [amino-group carrier protein]-C-terminal-gamma-(L-ornithyl)-L-glutamate + 2-oxoglutarate = [amino-group carrier protein]-C-terminal-gamma-(L-glutamyl-5-semialdehyde)-L-glutamate + L-glutamate. It participates in amino-acid biosynthesis; L-lysine biosynthesis via AAA pathway; L-lysine from L-alpha-aminoadipate (Thermus route): step 4/5. It functions in the pathway amino-acid biosynthesis; L-arginine biosynthesis. Functionally, involved in both the arginine and lysine biosynthetic pathways. This chain is [LysW]-aminoadipate semialdehyde/glutamate semialdehyde transaminase, found in Sulfolobus acidocaldarius (strain ATCC 33909 / DSM 639 / JCM 8929 / NBRC 15157 / NCIMB 11770).